We begin with the raw amino-acid sequence, 142 residues long: Glia maturation factor gamma (142 aa).

Position 2 is an N-acetylserine (serine 2). In terms of domain architecture, ADF-H spans 4 to 139 (SLVVCEVDPE…TETWLKEKLA (136 aa)).

The protein belongs to the actin-binding proteins ADF family. GMF subfamily.

The chain is Glia maturation factor gamma (Gmfg) from Mus musculus (Mouse).